Here is a 97-residue protein sequence, read N- to C-terminus: Putative membrane protein insertion efficiency factor (97 aa).

It belongs to the UPF0161 family.

It is found in the cell membrane. Could be involved in insertion of integral membrane proteins into the membrane. The protein is Putative membrane protein insertion efficiency factor of Lactobacillus helveticus (strain DPC 4571).